The sequence spans 426 residues: MDENIIINILRKEMMPGLGVTEPASIALSSAKAYEVIGGEIKNIKIIADPGLFKNAFSCAIPGTKEVGNEMAALLGAICGDASLGLECLRKIKKEDVSKAKTMLDKIDIEIKSQTEGLYVESIVTTNNGIGRTIIRYKHDNIVLVEKNNKILYQKENTLNKSNNFSQEAIDSKKITEMKLDEIVEFVNNVNYEKIEFLLESIKMNKKLSEKGLEGLGIGLGKLILESCNENNYELYAEALTCSAIDARVSGATVPAMTVTGSGNHGIITTLPLLAIKEKKNLNNEVLARSIALSYIINIYIKEFSGKLSAFCGCAVAAGTGVSAGICYLLGGSLKEIENTIKNMASNITGMICTGGNLACSLKANTGVKAAFLSAKMALNNIVIPNKCGIVSNSIEDTMKNIGRIAYPGMMETDKEILNIMIESSK.

It belongs to the UPF0597 family.

In Clostridium botulinum (strain Okra / Type B1), this protein is UPF0597 protein CLD_2825.